Consider the following 484-residue polypeptide: Serine/arginine-rich splicing factor 11 (484 aa).

Residues 1–33 form a disordered region; that stretch reads MSNTTVVPSTAGPGPSGGPGGGGGGGGGGGGTE. Serine 2 is modified (N-acetylserine). A compositionally biased stretch (gly residues) spans 14–32; it reads GPSGGPGGGGGGGGGGGGT. Positions 33 to 113 constitute an RRM domain; it reads EVIQVTNVSP…ALIVVPYAEG (81 aa). Lysine 197 participates in a covalent cross-link: Glycyl lysine isopeptide (Lys-Gly) (interchain with G-Cter in SUMO2). Serine 207 is modified (phosphoserine). A Glycyl lysine isopeptide (Lys-Gly) (interchain with G-Cter in SUMO2) cross-link involves residue lysine 211. The residue at position 212 (serine 212) is a Phosphoserine. A disordered region spans residues 233 to 484; that stretch reads ISAAIEPDKK…HHEEDMDMSD (252 aa). Residues 244–308 show a composition bias toward basic residues; the sequence is EKRRHSRSRS…ERGRRSRSTS (65 aa). 10 tandem repeats follow at residues 247-255, 258-265, 267-274, 275-282, 285-292, 293-300, 302-309, 321-328, 334-341, and 346-353. Residues 247-353 form a 10 X 8 AA approximate repeats of R-R-S-R-S-R-S-R region; that stretch reads RHSRSRSRSR…RRRRSRSGTR (107 aa). Residues 309–320 are compositionally biased toward basic and acidic residues; that stretch reads KTRDKKKEDKEK. Serine 323 is modified (phosphoserine). Threonine 325 carries the phosphothreonine modification. Basic residues predominate over residues 334–379; that stretch reads RRSRSASRERRRRRSRSGTRSPKKPRSPKRKLSRSPSPRRHKKEKK. 3 stretches are compositionally biased toward basic and acidic residues: residues 380-395, 402-424, and 433-478; these read KDKDKERSRDERERST, KDKEKDRERKSESDKDVKQVTRD, and DSEK…HHEE. Serine 414 and serine 434 each carry phosphoserine. Threonine 447 carries the phosphothreonine modification. 4 positions are modified to phosphoserine: serine 449, serine 456, serine 464, and serine 483.

It belongs to the splicing factor SR family. Interacts with PUF60.

Its subcellular location is the nucleus. Functionally, may function in pre-mRNA splicing. The polypeptide is Serine/arginine-rich splicing factor 11 (SRSF11) (Homo sapiens (Human)).